The chain runs to 230 residues: Ureidoacrylate amidohydrolase RutB (230 aa).

Aspartate 24 acts as the Proton acceptor in catalysis. Lysine 133 is a catalytic residue. The active-site Nucleophile is cysteine 166.

The protein belongs to the isochorismatase family. RutB subfamily.

The enzyme catalyses (Z)-3-ureidoacrylate + H2O + H(+) = (Z)-3-aminoacrylate + NH4(+) + CO2. It catalyses the reaction (Z)-3-ureidoacrylate + H2O = (Z)-3-aminoacrylate + carbamate + H(+). The catalysed reaction is (Z)-2-methylureidoacrylate + H2O + H(+) = (Z)-2-methylaminoacrylate + NH4(+) + CO2. In terms of biological role, hydrolyzes ureidoacrylate to form aminoacrylate and carbamate. The carbamate hydrolyzes spontaneously, thereby releasing one of the nitrogen atoms of the pyrimidine ring as ammonia and one of its carbon atoms as CO2. This chain is Ureidoacrylate amidohydrolase RutB, found in Escherichia coli O6:K15:H31 (strain 536 / UPEC).